The sequence spans 121 residues: Large ribosomal subunit protein uL18 (121 aa).

Positions 1-22 are enriched in basic residues; sequence MIKKPDKKTLRQGKHKRVRRKV. The tract at residues 1 to 23 is disordered; sequence MIKKPDKKTLRQGKHKRVRRKVA.

It belongs to the universal ribosomal protein uL18 family. As to quaternary structure, part of the 50S ribosomal subunit; part of the 5S rRNA/L5/L18/L25 subcomplex. Contacts the 5S and 23S rRNAs.

This is one of the proteins that bind and probably mediate the attachment of the 5S RNA into the large ribosomal subunit, where it forms part of the central protuberance. The chain is Large ribosomal subunit protein uL18 from Syntrophomonas wolfei subsp. wolfei (strain DSM 2245B / Goettingen).